Here is a 92-residue protein sequence, read N- to C-terminus: Acylphosphatase (92 aa).

Residues 5–90 (TYRLVICGLV…GDFVGFQLRE (86 aa)) form the Acylphosphatase-like domain. Active-site residues include Arg-20 and Asn-38.

Belongs to the acylphosphatase family.

The catalysed reaction is an acyl phosphate + H2O = a carboxylate + phosphate + H(+). This is Acylphosphatase (acyP) from Albidiferax ferrireducens (strain ATCC BAA-621 / DSM 15236 / T118) (Rhodoferax ferrireducens).